The sequence spans 367 residues: MNTTSNTSNIIVGLSGGVDSSVTAALLKQQGYQVRGVFMQNWENDDNDEYCSIKQDSFDAIAVADIVGIDIDIVNFAAQYKDKVFAYFLQEYSAGRTPNPDVLCNAEIKFKCFLDYAVGQGADTIATGHYARKEARNGVHYLLKGLDRNKDQSYFLYRLKPFQLERAIFPLGGLEKPEVRRLAAEFNLPTAAKKDSTGICFIGERPFREFLQKYLPTDNGKMVTPEGKTIGEHVGLMFYTLGQRKGLGIGGAGEPWFVAAKDLTKNELIVVQGHDHPLLYTRSLVMNDLSFTLPERPKAGRYTCKTRYRMADAPCELCYLDDETAELVFDEPQWAVTPGQSAVLYDVDICLGGGIIQTTDKPVIITR.

ATP is bound by residues 13 to 20 (GLSGGVDS) and M39. The segment at 99–101 (NPD) is interaction with target base in tRNA. C104 (nucleophile) is an active-site residue. C104 and C200 are joined by a disulfide. Residue G128 participates in ATP binding. Residues 150-152 (KDQ) form an interaction with tRNA region. C200 (cysteine persulfide intermediate) is an active-site residue. The tract at residues 307–308 (RY) is interaction with tRNA.

It belongs to the MnmA/TRMU family.

It is found in the cytoplasm. It carries out the reaction S-sulfanyl-L-cysteinyl-[protein] + uridine(34) in tRNA + AH2 + ATP = 2-thiouridine(34) in tRNA + L-cysteinyl-[protein] + A + AMP + diphosphate + H(+). Its function is as follows. Catalyzes the 2-thiolation of uridine at the wobble position (U34) of tRNA, leading to the formation of s(2)U34. This is tRNA-specific 2-thiouridylase MnmA from Neisseria gonorrhoeae (strain ATCC 700825 / FA 1090).